The primary structure comprises 603 residues: DNA mismatch repair protein MutL (603 aa).

Belongs to the DNA mismatch repair MutL/HexB family.

Its function is as follows. This protein is involved in the repair of mismatches in DNA. It is required for dam-dependent methyl-directed DNA mismatch repair. May act as a 'molecular matchmaker', a protein that promotes the formation of a stable complex between two or more DNA-binding proteins in an ATP-dependent manner without itself being part of a final effector complex. This chain is DNA mismatch repair protein MutL, found in Rhodopseudomonas palustris (strain BisA53).